A 317-amino-acid chain; its full sequence is Dimethyladenosine transferase (317 aa).

Positions 37, 39, 64, 85, 113, and 128 each coordinate S-adenosyl-L-methionine.

The protein belongs to the class I-like SAM-binding methyltransferase superfamily. rRNA adenine N(6)-methyltransferase family.

The enzyme catalyses adenosine(1779)/adenosine(1780) in 18S rRNA + 4 S-adenosyl-L-methionine = N(6)-dimethyladenosine(1779)/N(6)-dimethyladenosine(1780) in 18S rRNA + 4 S-adenosyl-L-homocysteine + 4 H(+). Functionally, specifically dimethylates two adjacent adenosines in the loop of a conserved hairpin near the 3'-end of 18S rRNA in the 40S particle. The protein is Dimethyladenosine transferase (DIM1) of Candida glabrata (strain ATCC 2001 / BCRC 20586 / JCM 3761 / NBRC 0622 / NRRL Y-65 / CBS 138) (Yeast).